The following is an 863-amino-acid chain: DNA replication licensing factor mcm4 (863 aa).

A disordered region spans residues 1 to 121; that stretch reads MSSPTSTPSR…ARQRPDLGSA (121 aa). Composition is skewed to polar residues over residues 54-64 and 78-99; these read SPSGDLQSPSG and SALQ…SSRV. The segment at 306–331 adopts a C4-type zinc-finger fold; that stretch reads CQVCAFTTRVEIDRGRISEPSVCKHC. The 210-residue stretch at 458 to 667 folds into the MCM domain; that stretch reads IYERLASALA…YDRRLAHHLV (210 aa). Positions 471, 497, 516, 517, 618, 643, 732, and 735 each coordinate ATP. The Arginine finger motif lies at 642–645; it reads SRFD.

This sequence belongs to the MCM family. Component of the mcm2-7 complex (RLF-M). The complex forms a toroidal hexameric ring with the proposed subunit order mcm2-mcm6-mcm4-mcm7-mcm3-mcm5. The heterodimer of mmcm3/mcm5 interacts with mcm4, mmcm6, mcm7 and weakly with mcm2. Component of the CMG helicase complex, composed of the mcm2-7 complex, the GINS complex and cdc45. Hyperphosphorylated during mitosis in a mechanism requiring cdc2-cyclin B and other kinases. Undergoes dephosphorylation after exiting mitosis, existing in a partially phosphorylated state in the cytosolic interphase mcm complex which associates with the pre-replication complexes (pre-Rcs). Complete dephosphorylation inactivates the mcm complex, preventing its binding to chromatin. Becomes actively phosphorylated during S phase once the mcm complex is assembled on the chromatin. This chromatin-associated phosphorylation occurs during the activation of the pre-Rcs and is independent of cdks. Phosphorylated by the cdc7-dbf4b complex.

The protein resides in the nucleus. It localises to the chromosome. It carries out the reaction ATP + H2O = ADP + phosphate + H(+). Acts as a component of the MCM2-7 complex (MCM complex) which is the replicative helicase essential for 'once per cell cycle' DNA replication initiation and elongation in eukaryotic cells. Core component of CDC45-MCM-GINS (CMG) helicase, the molecular machine that unwinds template DNA during replication, and around which the replisome is built. The active ATPase sites in the MCM2-7 ring are formed through the interaction surfaces of two neighboring subunits such that a critical structure of a conserved arginine finger motif is provided in trans relative to the ATP-binding site of the Walker A box of the adjacent subunit. The six ATPase active sites, however, are likely to contribute differentially to the complex helicase activity. This chain is DNA replication licensing factor mcm4, found in Xenopus tropicalis (Western clawed frog).